The chain runs to 1469 residues: ABC transporter G family member 36 (1469 aa).

Methionine 1 carries the N-acetylmethionine modification. A phosphoserine mark is found at serine 37, serine 38, and serine 40. Threonine 43 carries the post-translational modification Phosphothreonine. Phosphoserine is present on serine 45. The 274-residue stretch at 171–444 folds into the ABC transporter 1 domain; that stretch reads LGMIGIQFAK…FESFGFKCPE (274 aa). 204–211 is an ATP binding site; the sequence is GPPSSGKT. Residues 522–735 enclose the ABC transmembrane type-2 1 domain; that stretch reads ELLKSCWDKE…AFNGLVVNEM (214 aa). The next 7 helical transmembrane spans lie at 540 to 560, 575 to 595, 621 to 641, 659 to 679, 685 to 705, 713 to 733, and 772 to 792; these read FFYV…STLF, LYIG…FAEM, LPTF…WMVV, FLLV…IASV, IANT…GFLL, WWGW…LVVN, and ISVG…TLAL. Residues 806–852 form a disordered region; that stretch reads PEEENEDADQGKDPMRRSLSTADGNRRGEVAMGRMSRDSAAEASGGA. Serine 825, serine 841, and serine 844 each carry phosphoserine. The segment covering 829–845 has biased composition (basic and acidic residues); that stretch reads GNRRGEVAMGRMSRDSA. Residues 867 to 1119 enclose the ABC transporter 2 domain; the sequence is MSFDDVKYFV…KVVEYFESFP (253 aa). Residue 912–919 coordinates ATP; sequence GVSGAGKT. Residues 1192–1406 enclose the ABC transmembrane type-2 2 domain; the sequence is GQFKSCLWKQ…TVYGLIVSQY (215 aa). 7 helical membrane passes run 1216–1236, 1239–1259, 1299–1319, 1326–1346, 1356–1376, 1384–1404, and 1441–1461; these read FIFT…IGGN, NAGD…FVGI, LPYV…MVGF, FFWF…YGMM, VASI…GFFI, WWIW…LIVS, and PVAA…AFCI.

Belongs to the ABC transporter superfamily. ABCG family. PDR (TC 3.A.1.205) subfamily. In terms of assembly, interacts, in a Ca(2+)-dependent manner, with calmodulins CaM3, CaM7 and several CaM-like proteins (CML8, CML9, CML12/CAL4, CML37 and CML38), as well as with calcium regulated proteins CBL4/SOS3 and KIC. In terms of processing, phosphorylated upon perception of pathogen-associated molecular patterns (PAMPs); phosphorylations at Ser-40 and Ser-45, which likely regulate transport activity, are required for plant defense against pathogens (e.g. Blumeria graminis), but dispensable for recruitment to the host-pathogen interface and penetration sites. Phosphorylation at Ser-841 seems to be required for protein stability. Ubiquitous (at protein level). Higher levels in root hairs, stomata, epidermal cells, and hydathodes. Concentrated at the infection site of infected plants, including papillae and haustoria. Accumulates at the periphery of lateral root cap and root epidermal cells, especially in the outer lateral membrane domain facing the environment.

It is found in the cell membrane. Its subcellular location is the golgi apparatus. The protein resides in the trans-Golgi network membrane. It localises to the endoplasmic reticulum membrane. In terms of biological role, together with ABCG37, regulates auxin homeostasis and responses by playing a dual role in coumarin (e.g. esculin) and in the auxin precursor indole 3-butyric acid (IBA) efflux transport, thus influencing cotyledons, roots and root hairs development. Mediates the transport (export into the apoplast) of distinct indole-type metabolites in distinct biological processes; a precursor of 4-O-beta-D-glucosyl-indol-3-yl formamide (4OGlcI3F), a pathogen-inducible tryptophan-derived compound (e.g. upon Blumeria graminis conidiospore inoculation), being a probable substrate in extracellular pathogen defense. Involved in the cellular detoxification of xenobiotics by promoting the excretion of some auxinic herbicides including 4-(2,4-dichlorophenoxy)butyric acid (2,4-DB) and other members of the phenoxyalkanoic acid family but not 2,4-dichlorophenoxyacetic acid (2,4-D). Mediates thymidine exudation in the rhizosphere. May be a transporter of lignin precursors during tracheary element differentiation. Key factor that controls the extent of cell death in the defense response. Necessary for both callose deposition and glucosinolate activation in response to pathogens. As a central component of nonhost resistance (NHR), required for limiting invasion by nonadapted pathogens including powdery mildews (e.g. Blumeria graminis and Erysiphe pisi), root-penetrating pathogenic fungi (e.g. Fusarium oxysporum), Phakopsora pachyrhizi and Colletotrichum gloeosporioides (anthracnose fungi), probably by sensing Ca(2+) via interactions with calmodulins (e.g. CaM7). Confers resistance to cadmium (Cd) and lead (Pb), probably as an efflux pump of Cd2+ or Cd conjugates, and possibly, of chemicals that mediate pathogen resistance. Promotes resistance to abiotic stresses (e.g. drought and salt stress) and favors general growth by preventing sodium accumulation in plants. Required for microbe-associated molecular patterns (MAMPs)- and salicylic acid (SA)-dependent hypersensitive cell death (HR), involving indole glucosinolate breakdown products (e.g. indole-3-acetonitrile), probably in a PEN2 myrosinase-dependent metabolic pathway, triggered by the recognition of effectors from incompatible pathogens including oomycetes and bacteria (e.g. AvrRpm1 and AvrRps4) and benzothiadiazole- (BTH), and leading to an induced protection against pathogens (e.g. Pseudomonas syringae pv. tomato DC3000, Golovinomyces orontii and Hyaloperonospora arabidopsidis). This chain is ABC transporter G family member 36, found in Arabidopsis thaliana (Mouse-ear cress).